The sequence spans 258 residues: Ribosomal RNA small subunit methyltransferase A (258 aa).

Residues H13, L15, G40, E62, D87, and N108 each coordinate S-adenosyl-L-methionine.

It belongs to the class I-like SAM-binding methyltransferase superfamily. rRNA adenine N(6)-methyltransferase family. RsmA subfamily.

It localises to the cytoplasm. The catalysed reaction is adenosine(1518)/adenosine(1519) in 16S rRNA + 4 S-adenosyl-L-methionine = N(6)-dimethyladenosine(1518)/N(6)-dimethyladenosine(1519) in 16S rRNA + 4 S-adenosyl-L-homocysteine + 4 H(+). Specifically dimethylates two adjacent adenosines (A1518 and A1519) in the loop of a conserved hairpin near the 3'-end of 16S rRNA in the 30S particle. May play a critical role in biogenesis of 30S subunits. The protein is Ribosomal RNA small subunit methyltransferase A of Sulfurihydrogenibium sp. (strain YO3AOP1).